Reading from the N-terminus, the 294-residue chain is MKTRTRKGAVGIGTLIVFIAMVLVAAVAAAVLINTSGYLQQKSQATGRETTQEVASGIKVERVVGKTDLPYTNIGSDSTELDYIRQLAIYVSPNAGSSGIDLSNTKVILSNGEKEAVLKYAGGPDDDYDAFTKGVQNDIFDLYFKYSSDGTNWNNEHSGLAAWKNLYYTGTNHDPAKNFGIIVIQDADNSLTEDYPTLNKGDLVVLTVLVGSLEEYTGNPSNDDNAVYETGGAKYDYIDVNGNSDTTDTIQGVFGEGIPAGTKITGEVVPEFGAPGVIEFTTPSTYTEAVMELQ.

A propeptide spanning residues 1-8 is cleaved from the precursor; sequence MKTRTRKG.

This sequence belongs to the archaeal flagellin family.

It is found in the archaeal flagellum. Functionally, flagellin is the subunit protein which polymerizes to form the filaments of archaeal flagella. This chain is Flagellin B1 (flaB1), found in Thermococcus kodakarensis (strain ATCC BAA-918 / JCM 12380 / KOD1) (Pyrococcus kodakaraensis (strain KOD1)).